The following is a 190-amino-acid chain: MTQIIDRVTCLFPCFRNKNANYDLISQDTDNSELSIKETSETKQVRQWLDTSKGSITVEMDLLVLPGQPNIKTTVGPDGWPSGPKINITFHERIISLAKMKADPKDPGTFEVYIKGKIRLYNREIFLEMANNARKHYTAAYEGGFISYKDFVAVQSYIQAGIDNEELMRQVIVSLANHKFETMFPDPSDW.

This is an uncharacterized protein from Acanthamoeba polyphaga mimivirus (APMV).